The primary structure comprises 263 residues: H-2 class II histocompatibility antigen, A-S beta chain (263 aa).

The first 27 residues, 1 to 27 (MALQIPSLLLSAAVVVLMVLSSPGTEG), serve as a signal peptide directing secretion. A beta-1 region spans residues 28–120 (GDSERHFVFQ…VETHTSLRRL (93 aa)). Topologically, residues 28-224 (GDSERHFVFQ…RAQSESARSK (197 aa)) are extracellular. Intrachain disulfides connect Cys42–Cys104 and Cys143–Cys199. N-linked (GlcNAc...) asparagine glycosylation occurs at Asn46. A beta-2 region spans residues 121–214 (EQPNVVISLS…SLKSPITVEW (94 aa)). The Ig-like C1-type domain occupies 123–211 (PNVVISLSRT…EHPSLKSPIT (89 aa)). The interval 215–224 (RAQSESARSK) is connecting peptide. The chain crosses the membrane as a helical span at residues 225-245 (MLSGIGGCVLGVIFLGLGLFI). Residues 246–263 (RHRSQKGPRGPPPAGLLQ) are Cytoplasmic-facing.

Belongs to the MHC class II family. Post-translationally, ubiquitinated in immature dendritic cells leading to down-regulation of MHC class II.

It is found in the membrane. This is H-2 class II histocompatibility antigen, A-S beta chain (H2-Ab1) from Mus musculus (Mouse).